The chain runs to 379 residues: Carbamoyl phosphate synthase small chain (379 aa).

Residues 1–187 form a CPSase region; sequence MNFTPALLAL…GSGHAPAPAS (187 aa). Serine 48, glycine 239, and glycine 241 together coordinate L-glutamine. The 188-residue stretch at 191–378 folds into the Glutamine amidotransferase type-1 domain; sequence KVVAYDFGVK…IELMKPQGVR (188 aa). The active-site Nucleophile is the cysteine 267. The L-glutamine site is built by leucine 268, glutamine 271, asparagine 309, glycine 311, and phenylalanine 312. Active-site residues include histidine 351 and glutamate 353.

The protein belongs to the CarA family. As to quaternary structure, composed of two chains; the small (or glutamine) chain promotes the hydrolysis of glutamine to ammonia, which is used by the large (or ammonia) chain to synthesize carbamoyl phosphate. Tetramer of heterodimers (alpha,beta)4.

It catalyses the reaction hydrogencarbonate + L-glutamine + 2 ATP + H2O = carbamoyl phosphate + L-glutamate + 2 ADP + phosphate + 2 H(+). The enzyme catalyses L-glutamine + H2O = L-glutamate + NH4(+). The protein operates within amino-acid biosynthesis; L-arginine biosynthesis; carbamoyl phosphate from bicarbonate: step 1/1. It participates in pyrimidine metabolism; UMP biosynthesis via de novo pathway; (S)-dihydroorotate from bicarbonate: step 1/3. Small subunit of the glutamine-dependent carbamoyl phosphate synthetase (CPSase). CPSase catalyzes the formation of carbamoyl phosphate from the ammonia moiety of glutamine, carbonate, and phosphate donated by ATP, constituting the first step of 2 biosynthetic pathways, one leading to arginine and/or urea and the other to pyrimidine nucleotides. The small subunit (glutamine amidotransferase) binds and cleaves glutamine to supply the large subunit with the substrate ammonia. This chain is Carbamoyl phosphate synthase small chain, found in Thioalkalivibrio sulfidiphilus (strain HL-EbGR7).